Reading from the N-terminus, the 78-residue chain is Small ribosomal subunit protein bS18 (78 aa).

This sequence belongs to the bacterial ribosomal protein bS18 family. As to quaternary structure, part of the 30S ribosomal subunit. Forms a tight heterodimer with protein bS6.

In terms of biological role, binds as a heterodimer with protein bS6 to the central domain of the 16S rRNA, where it helps stabilize the platform of the 30S subunit. This chain is Small ribosomal subunit protein bS18, found in Lacticaseibacillus casei (strain BL23) (Lactobacillus casei).